A 709-amino-acid polypeptide reads, in one-letter code: ATP-dependent zinc metalloprotease FtsH (709 aa).

At 1-25 (MKKNKGLNEATTSEKPQFPKRTAWK) the chain is on the cytoplasmic side. Residues 26-46 (IFWWVVILAIIIGILVYILMP) traverse the membrane as a helical segment. The Extracellular segment spans residues 47-171 (RATTAVIEKW…FVAPDTRARD (125 aa)). Residues 172-192 (VLNIFFGLLPIIIFVIFFLLF) form a helical membrane-spanning segment. The Cytoplasmic portion of the chain corresponds to 193–709 (WRSARGISGG…DTEKDSETNS (517 aa)). 268–275 (GPPGTGKT) serves as a coordination point for ATP. His490 is a Zn(2+) binding site. Glu491 is a catalytic residue. The Zn(2+) site is built by His494 and Asp569. The segment at 673 to 709 (ILAQKQEQQAKQKAEAKEAKLNKKTEKDTEKDSETNS) is disordered. Residues 680–709 (QQAKQKAEAKEAKLNKKTEKDTEKDSETNS) are compositionally biased toward basic and acidic residues.

It in the central section; belongs to the AAA ATPase family. This sequence in the C-terminal section; belongs to the peptidase M41 family. In terms of assembly, homohexamer. Zn(2+) serves as cofactor.

Its subcellular location is the cell membrane. Functionally, acts as a processive, ATP-dependent zinc metallopeptidase for both cytoplasmic and membrane proteins. Plays a role in the quality control of integral membrane proteins. In Mycoplasma pneumoniae (strain ATCC 29342 / M129 / Subtype 1) (Mycoplasmoides pneumoniae), this protein is ATP-dependent zinc metalloprotease FtsH.